A 181-amino-acid polypeptide reads, in one-letter code: ADP-ribosylation factor 2-A (181 aa).

A lipid anchor (N-myristoyl glycine) is attached at glycine 2. Residues 24–31 (GLDAAGKT), 67–71 (DVGGQ), and 126–129 (NKQD) each bind GTP.

Belongs to the small GTPase superfamily. Arf family.

It is found in the golgi apparatus. Its activity is regulated as follows. Activated by AGD10. In terms of biological role, GTP-binding protein involved in protein trafficking; may modulate vesicle budding and uncoating within the Golgi apparatus. The polypeptide is ADP-ribosylation factor 2-A (ARF2-A) (Arabidopsis thaliana (Mouse-ear cress)).